Reading from the N-terminus, the 138-residue chain is 18 kDa antigen 2 (138 aa).

The sHSP domain maps to 21 to 131 (GTRRPAVMPM…KPRRIEINHN (111 aa)).

It belongs to the small heat shock protein (HSP20) family.

Its function is as follows. Not known. This protein is one of the major immune reactive proteins in mycobacteria. The polypeptide is 18 kDa antigen 2 (Mycobacterium avium).